A 1149-amino-acid chain; its full sequence is MTAKLLYELVHEAARAHGDKRAVAFDSSIAARVSLTYDELIFMSDELTAQLRVSVQNHEGAIGLFCHPDVLLPVWIIGILQFPAAYLPLDPASPPQCSLRMINNCRLSFCLIQNELLHSAFSILISVEVCATFCSHRLTLIKIKSEQKENSQANDAPFSSAVTKNIQQGEPLAYILHTSGTTGLPKIVKVPHRCIVPNIIHLRSVFKMTPEDVVFLSSPLTFDPSVVEVFLALSSGACLLIVPSAVKKMPRRLAHVLFKRNTTTVLQATPTLVRRFGKVVLQEEVLSADSSLRILAFGGEPCPSLNLVKSWRQEGNRTHIYNLYGTTEVSCWASWYKVPDEHLCLEDITDAPVPLGEPMLDTVMEVRDETGHLVTEGEGQLFIGGQNRVCLLDDEETVVKGTMRATGDWVQVQNSNLYFLGRKDRLVKRFGQRVHLDALQQMIESFSGVEACAVNLSKDDRLLAFIVLTSGHAGAPLSSEIHHDKHLTQPSEISVSVSPKASPPSLRVTEGEIRHQLSKRLSSHSIPDMMVFIPALPLTSHGKIAIDELMKTCETQRQDKNKQAPQKDTASVRLKLQNLWKECLGLQDDVVVEENAHFMFSGGDSLQALRLFDDITVAMGTTSVGLLEVILDGSFSDLLSHIMTETHDDAVLPSKKRTADYSDSEASGKRQHKEMTTSSDTESPFVVPSLRRTMGFVVVRRAAEVFKWGFQKIPQGIFSDAPDKNYVTNNSVGNDTGLISNPSLELSKSSAVTNMADHLQAQEETLLASESPSSHGGVREDSTGVLPLALRVLWRSDTGRCVDASPMLLVAPDRTTVFIGSHSHRLQALDLSRGEVIWERILGDRLESSAAISSCGGLVAIGCYDRQMYFLDVSCGDTVWTFETGDVVKSSPTVDPKTGLVFAGSHDGHVYALNPLTKTCTWQHYCGGGAVFSSPCVHLSPRQLYCSSLGGHLHCLNPDSGKVLWKYSSSAPFFSSPHCSDSSVFIGSVNGHIIGISHSGNTLWDFSTDGPVFSSPCISSLTLLTNQPPSTTPSSSVTTSPNHIVTCGSHDGHVYCLNAQNGSLLWQFQTTGKVFSTPFVFSGALWGLRTLAAVCSTDGKVWVLDGETGIQKATLSLPGELFSSPVIWGSKLVVGCRNDYVYCLELTTQ.

Residues 178–186 (TSGTTGLPK), Asp-408, Arg-422, and Lys-543 contribute to the ATP site. Residues 570–646 (ASVRLKLQNL…DLLSHIMTET (77 aa)) form the Carrier domain. An O-(pantetheine 4'-phosphoryl)serine modification is found at Ser-605. Residues 653 to 683 (PSKKRTADYSDSEASGKRQHKEMTTSSDTES) form a disordered region.

This sequence belongs to the ATP-dependent AMP-binding enzyme family.

Functionally, covalently binds beta-alanine in an ATP-dependent manner to form a thioester bond with its phosphopantetheine group and transfers it to an, as yet, unknown acceptor. May be required for a post-translational protein modification or for post-transcriptional modification of an RNA. The polypeptide is Beta-alanine-activating enzyme (aasdh) (Danio rerio (Zebrafish)).